We begin with the raw amino-acid sequence, 283 residues long: Putative 4-diphosphocytidyl-2-C-methyl-D-erythritol kinase (283 aa).

The active site involves Lys-11. Pro-95–Ser-105 serves as a coordination point for ATP. Residue Asp-137 is part of the active site.

This sequence belongs to the GHMP kinase family. IspE subfamily.

The enzyme catalyses 4-CDP-2-C-methyl-D-erythritol + ATP = 4-CDP-2-C-methyl-D-erythritol 2-phosphate + ADP + H(+). Its function is as follows. Catalyzes the phosphorylation of the position 2 hydroxy group of 4-diphosphocytidyl-2C-methyl-D-erythritol. This is Putative 4-diphosphocytidyl-2-C-methyl-D-erythritol kinase from Streptococcus equi subsp. equi (strain 4047).